The sequence spans 133 residues: Small ribosomal subunit protein uS8 (133 aa).

This sequence belongs to the universal ribosomal protein uS8 family. As to quaternary structure, part of the 30S ribosomal subunit. Contacts proteins S5 and S12.

In terms of biological role, one of the primary rRNA binding proteins, it binds directly to 16S rRNA central domain where it helps coordinate assembly of the platform of the 30S subunit. This is Small ribosomal subunit protein uS8 from Rippkaea orientalis (strain PCC 8801 / RF-1) (Cyanothece sp. (strain PCC 8801)).